The chain runs to 394 residues: HORMA domain-containing protein 1 (394 aa).

One can recognise an HORMA domain in the interval 24–226 (HQSLVLVKRL…TPFHIFKVKV (203 aa)). The segment at 252–394 (KILRDKDVED…RKFSEPKEHI (143 aa)) is disordered. The segment covering 253–282 (ILRDKDVEDEQEHYTSDDLDMETKMEEQEK) has biased composition (basic and acidic residues). 2 stretches are compositionally biased toward polar residues: residues 310 to 324 (LSIS…VNKT) and 343 to 352 (KMANGNQPVK). Residues 362–374 (QHESGRRVLHHFD) are compositionally biased toward basic and acidic residues. Ser376 carries the phosphoserine modification. A Nuclear localization signal motif is present at residues 383-386 (KRRK).

In terms of assembly, interacts with HORMAD2. Interacts with IHO1. Post-translationally, phosphorylated at Ser-377 in a SPO11-dependent manner.

The protein resides in the nucleus. Its subcellular location is the chromosome. Its function is as follows. Plays a key role in meiotic progression. Regulates 3 different functions during meiosis: ensures that sufficient numbers of processed DNA double-strand breaks (DSBs) are available for successful homology search by increasing the steady-state numbers of single-stranded DSB ends. Promotes synaptonemal-complex formation independently of its role in homology search. Plays a key role in the male mid-pachytene checkpoint and the female meiotic prophase checkpoint: required for efficient build-up of ATR activity on unsynapsed chromosome regions, a process believed to form the basis of meiotic silencing of unsynapsed chromatin (MSUC) and meiotic prophase quality control in both sexes. This is HORMA domain-containing protein 1 (HORMAD1) from Macaca fascicularis (Crab-eating macaque).